The primary structure comprises 160 residues: Small ribosomal subunit protein uS7B (160 aa).

The protein belongs to the universal ribosomal protein uS7 family. In terms of assembly, part of the 30S ribosomal subunit. Contacts proteins S9 and S11.

In terms of biological role, one of the primary rRNA binding proteins, it binds directly to 16S rRNA where it nucleates assembly of the head domain of the 30S subunit. Is located at the subunit interface close to the decoding center, probably blocks exit of the E-site tRNA. The chain is Small ribosomal subunit protein uS7B from Aquifex aeolicus (strain VF5).